The sequence spans 300 residues: Light-independent protochlorophyllide reductase iron-sulfur ATP-binding protein (300 aa).

ATP-binding positions include 43 to 48 (GIGKST) and K72. S47 is a binding site for Mg(2+). [4Fe-4S] cluster is bound by residues C128 and C162. Position 213-214 (213-214 (NR)) interacts with ATP.

This sequence belongs to the NifH/BchL/ChlL family. In terms of assembly, homodimer. Protochlorophyllide reductase is composed of three subunits; ChlL, ChlN and ChlB. The cofactor is [4Fe-4S] cluster.

The catalysed reaction is chlorophyllide a + oxidized 2[4Fe-4S]-[ferredoxin] + 2 ADP + 2 phosphate = protochlorophyllide a + reduced 2[4Fe-4S]-[ferredoxin] + 2 ATP + 2 H2O. Its pathway is porphyrin-containing compound metabolism; chlorophyll biosynthesis (light-independent). Component of the dark-operative protochlorophyllide reductase (DPOR) that uses Mg-ATP and reduced ferredoxin to reduce ring D of protochlorophyllide (Pchlide) to form chlorophyllide a (Chlide). This reaction is light-independent. The L component serves as a unique electron donor to the NB-component of the complex, and binds Mg-ATP. This chain is Light-independent protochlorophyllide reductase iron-sulfur ATP-binding protein, found in Synechococcus sp. (strain RCC307).